The primary structure comprises 107 residues: Homeobox protein HD-7 (107 aa).

The segment at residues 21-80 is a DNA-binding region (homeobox); the sequence is KPGEKVRKSEFQKEVLKKVYQATPYPTWENKIDIGILISLSPRAVDIWFQNKRHINKGKN.

It localises to the nucleus. The chain is Homeobox protein HD-7 (HD-7) from Encephalitozoon cuniculi (strain GB-M1) (Microsporidian parasite).